A 100-amino-acid polypeptide reads, in one-letter code: Large ribosomal subunit protein bL28 (100 aa).

Belongs to the bacterial ribosomal protein bL28 family.

In Gluconobacter oxydans (strain 621H) (Gluconobacter suboxydans), this protein is Large ribosomal subunit protein bL28.